A 141-amino-acid polypeptide reads, in one-letter code: Endoribonuclease YbeY (141 aa).

Zn(2+) contacts are provided by histidine 107, histidine 111, and aspartate 117.

The protein belongs to the endoribonuclease YbeY family. It depends on Zn(2+) as a cofactor.

It is found in the cytoplasm. Its function is as follows. Single strand-specific metallo-endoribonuclease involved in late-stage 70S ribosome quality control and in maturation of the 3' terminus of the 16S rRNA. In Endomicrobium trichonymphae, this protein is Endoribonuclease YbeY.